The primary structure comprises 345 residues: Phosphoribosylformylglycinamidine cyclo-ligase (345 aa).

This sequence belongs to the AIR synthase family.

It localises to the cytoplasm. It catalyses the reaction 2-formamido-N(1)-(5-O-phospho-beta-D-ribosyl)acetamidine + ATP = 5-amino-1-(5-phospho-beta-D-ribosyl)imidazole + ADP + phosphate + H(+). Its pathway is purine metabolism; IMP biosynthesis via de novo pathway; 5-amino-1-(5-phospho-D-ribosyl)imidazole from N(2)-formyl-N(1)-(5-phospho-D-ribosyl)glycinamide: step 2/2. In Synechococcus sp. (strain CC9902), this protein is Phosphoribosylformylglycinamidine cyclo-ligase.